The following is a 162-amino-acid chain: MDEKDLATQPEEAGQDPRLPGPHEDPRRQERAEAQAKKGPLAPDAQGKRLGQGPPKAGGRLLSLKGDRAFQRLRKGRAGRGRFVSVKWLPAPEARVGIVVSKKVGKAVVRNKVKRRLREILRRLHLPKAHILLVASPEAREAGFAELFQDVVRALRKSGLIQ.

A disordered region spans residues 1–62 (MDEKDLATQP…GPPKAGGRLL (62 aa)). Positions 21 to 36 (GPHEDPRRQERAEAQA) are enriched in basic and acidic residues.

This sequence belongs to the RnpA family. Consists of a catalytic RNA component (M1 or rnpB) and a protein subunit.

The enzyme catalyses Endonucleolytic cleavage of RNA, removing 5'-extranucleotides from tRNA precursor.. Functionally, RNaseP catalyzes the removal of the 5'-leader sequence from pre-tRNA to produce the mature 5'-terminus. It can also cleave other RNA substrates such as 4.5S RNA. The protein component plays an auxiliary but essential role in vivo by binding to the 5'-leader sequence and broadening the substrate specificity of the ribozyme. This is Ribonuclease P protein component from Thermus aquaticus.